We begin with the raw amino-acid sequence, 454 residues long: Peroxisome assembly protein 10 (454 aa).

Residues 1-23 are Peroxisomal matrix-facing; it reads MATQPPPARPPPPLTSSPYPYAA. A helical transmembrane segment spans residues 24–53; that stretch reads APDIIRAHQKDAYFQGVLANRLSDLHRRLR. Position 54 (G54) is a topological domain, cytoplasmic. A helical transmembrane segment spans residues 55 to 76; that stretch reads ARSAHAWAAETRTFAAALYLCL. At 77 to 132 the chain is on the peroxisomal matrix side; sequence TTLLGNRTLGEEYCDLVQVEEAPSKLFASSSSKAADDHIYENGLGGGGDGGPLLPS. A helical membrane pass occupies residues 133 to 165; it reads LPRRAGYILTAIVLPHLASRALPSVRSAIRKRL. The Cytoplasmic portion of the chain corresponds to 166–201; that stretch reads QSRLATLSRRRQQTGTKSGSGRGGRGGGGGITEYRV. The tract at residues 171–194 is disordered; sequence TLSRRRQQTGTKSGSGRGGRGGGG. Residues 183–194 show a composition bias toward gly residues; the sequence is SGSGRGGRGGGG. The helical transmembrane segment at 202–229 threads the bilayer; that stretch reads LRYLLTHLTPLTSGAHFRAATLAVFYFT. At 230-276 the chain is on the peroxisomal matrix side; it reads GAYYELSKWVWGLRYVFTTRAGRVVDDDHNRHHHSPQHGGGNGGRAG. The helical transmembrane segment at 277–296 threads the bilayer; that stretch reads YEVLGVLLVVQMAVRAWLHV. Topologically, residues 297–454 are cytoplasmic; the sequence is REQLSSGSVA…VQHILPLRAA (158 aa). The tract at residues 302-329 is disordered; the sequence is SGSVAGGGGEEEEDGEDGFRERTAFGPG. Residues C402, C405, C417, H419, C422, C425, C436, and C439 each coordinate Zn(2+). Residues 402-440 form an RING-type zinc finger; sequence CTLCLEELKDPAATQCGHVFCWACIGDWVREKPECPLCR.

This sequence belongs to the pex2/pex10/pex12 family. As to quaternary structure, component of the PEX2-PEX10-PEX12 retrotranslocation channel, composed of PEX2, PEX10 and PEX12.

It localises to the peroxisome membrane. The enzyme catalyses S-ubiquitinyl-[E2 ubiquitin-conjugating enzyme]-L-cysteine + [acceptor protein]-L-lysine = [E2 ubiquitin-conjugating enzyme]-L-cysteine + N(6)-ubiquitinyl-[acceptor protein]-L-lysine.. It functions in the pathway protein modification; protein ubiquitination. Its activity is regulated as follows. The E3 ubiquitin-protein ligase activity is stimulated by PEX12. In terms of biological role, E3 ubiquitin-protein ligase component of a retrotranslocation channel required for peroxisome organization by mediating export of the PEX5 receptor from peroxisomes to the cytosol, thereby promoting PEX5 recycling. The retrotranslocation channel is composed of PEX2, PEX10 and PEX12; each subunit contributing transmembrane segments that coassemble into an open channel that specifically allows the passage of PEX5 through the peroxisomal membrane. PEX10 also regulates PEX5 recycling by acting as a E3 ubiquitin-protein ligase. When PEX5 recycling is compromised, PEX10 catalyzes polyubiquitination of PEX5 during its passage through the retrotranslocation channel, leading to its degradation. The protein is Peroxisome assembly protein 10 of Thermothelomyces thermophilus (strain ATCC 42464 / BCRC 31852 / DSM 1799) (Sporotrichum thermophile).